Here is a 269-residue protein sequence, read N- to C-terminus: MSFFETLADRIDDRDSVVSVGLDPDPDRLPEFLDADLPRWAFNRRVIDATHEHAACYKPNAAFYEDSDGWRALEETIAYAHGKGVPVLLDAKRGDIGNTARQYATLLDDDGLGADAITANPYMGRDTLEPYLSRADKGVFILCRTSNSGGADFQNLTVGNDKRLYEYVAQRCQEWNEHENVGLVVGATAPEELESVRDLVDLPFLVPGVGAQGGDAAAAVDHGLADGVGLVNSSRGIIFAGEGAADEDEYFRAVGAAAKRLKQRLNKHR.

Lys-92 (proton donor) is an active-site residue.

The protein belongs to the OMP decarboxylase family. Type 2 subfamily.

The enzyme catalyses orotidine 5'-phosphate + H(+) = UMP + CO2. It participates in pyrimidine metabolism; UMP biosynthesis via de novo pathway; UMP from orotate: step 2/2. This is Orotidine 5'-phosphate decarboxylase from Natronomonas pharaonis (strain ATCC 35678 / DSM 2160 / CIP 103997 / JCM 8858 / NBRC 14720 / NCIMB 2260 / Gabara) (Halobacterium pharaonis).